We begin with the raw amino-acid sequence, 130 residues long: Small ribosomal subunit protein uS9 (130 aa).

The segment at 105-130 is disordered; sequence TRDPRMKERKKYGLHKARKAPQYSKR. A compositionally biased stretch (basic residues) spans 111 to 130; the sequence is KERKKYGLHKARKAPQYSKR.

The protein belongs to the universal ribosomal protein uS9 family.

The protein is Small ribosomal subunit protein uS9 of Syntrophomonas wolfei subsp. wolfei (strain DSM 2245B / Goettingen).